The chain runs to 213 residues: Transcriptional regulatory protein CrdR (213 aa).

A Response regulatory domain is found at 4-119; that stretch reads KIFLLEDDYL…ELEARIKRFF (116 aa). A 4-aspartylphosphate modification is found at Asp-53. Positions 121-212 form a DNA-binding region, ompR/PhoB-type; it reads DDPIEIMPNI…HKGVGYRFNP (92 aa).

In terms of processing, phosphorylated by CrdS.

Its function is as follows. Member of the two-component regulatory system CrdR/CrdS that induces the transcriptional induction of the copper resistance determinant CrdA. Upon phosphorylation by CrdS, functions as a transcriptional regulator by direct binding to promoter regions of target genes including the crdA promoter or nitric oxide-responsive gene promoters. This Helicobacter pylori (strain ATCC 700392 / 26695) (Campylobacter pylori) protein is Transcriptional regulatory protein CrdR.